We begin with the raw amino-acid sequence, 577 residues long: MAPISLSEIISALPSEDSWGPTTTSETTLNGVPYAPYSKGDKLGRMADWTAEGKDGRDGRGGRQQYNRNYRDQQVYGAGTSSLFAVQLAEDESTFSVVSNTRDSTKTRFGRGGTFTRGRGQRGGRADTRGGRGQFQRVGGRGGQQGYSSYDTRGGRGGARGGRKFGWKDYDKPQRNRDASVNIKPDWKMLEEIDFNRLAKLNLDTDDGEDIDSYGFLYYYDRAFDKQPVKAAERKLNVVDRASYNVTTSSDPVIQELAEKDEATIFATDSILSMLMCSPRSVYPWDIVIVRQGNKVFLDKRDNATLDMVTVNENAADAPMDASEGSKDAINQPSALAEEATYINHNFANQVMKESDSQKVEMEHENPFYNPSEETDPPASKAYKYRKFDLSLNDEDPVHLVVRTEIDAVSKNAISGEDQYLTVKALNEFDSKAQGSGGALDWRTKLVSQRGAVVATEMKNNSCKLARWTVQSIIAKADVMKLGFVSRANPKLNDRHVILGVIGWKPRDFASQMNLSLSNGWGIVRTIVDMCLKREEGKYVLVKDPNKPILRLYQVPAGSFEDDGEGDVIEENVEEED.

Residues 103 to 177 (DSTKTRFGRG…KDYDKPQRNR (75 aa)) form a disordered region. Positions 166–177 (GWKDYDKPQRNR) are enriched in basic and acidic residues. Positions 305 to 319 (TLDMVTVNENAADAP) are RNA gate. Residues 558-577 (GSFEDDGEGDVIEENVEEED) form a disordered region. A compositionally biased stretch (acidic residues) spans 560–577 (FEDDGEGDVIEENVEEED).

The protein belongs to the eIF-3 subunit D family. In terms of assembly, component of the eukaryotic translation initiation factor 3 (eIF-3) complex.

Its subcellular location is the cytoplasm. Its function is as follows. mRNA cap-binding component of the eukaryotic translation initiation factor 3 (eIF-3) complex, which is involved in protein synthesis of a specialized repertoire of mRNAs and, together with other initiation factors, stimulates binding of mRNA and methionyl-tRNAi to the 40S ribosome. The eIF-3 complex specifically targets and initiates translation of a subset of mRNAs involved in cell proliferation. In the eIF-3 complex, eif3d specifically recognizes and binds the 7-methylguanosine cap of a subset of mRNAs. This chain is Eukaryotic translation initiation factor 3 subunit D, found in Sclerotinia sclerotiorum (strain ATCC 18683 / 1980 / Ss-1) (White mold).